Here is a 357-residue protein sequence, read N- to C-terminus: Alanine racemase (357 aa).

The active-site Proton acceptor; specific for D-alanine is Lys34. At Lys34 the chain carries N6-(pyridoxal phosphate)lysine. Arg130 serves as a coordination point for substrate. Catalysis depends on Tyr253, which acts as the Proton acceptor; specific for L-alanine. A substrate-binding site is contributed by Met301.

This sequence belongs to the alanine racemase family. The cofactor is pyridoxal 5'-phosphate.

The catalysed reaction is L-alanine = D-alanine. Its pathway is amino-acid biosynthesis; D-alanine biosynthesis; D-alanine from L-alanine: step 1/1. Its function is as follows. Catalyzes the interconversion of L-alanine and D-alanine. May also act on other amino acids. This chain is Alanine racemase (alr), found in Mannheimia succiniciproducens (strain KCTC 0769BP / MBEL55E).